Reading from the N-terminus, the 230-residue chain is Cytochrome b6-f complex iron-sulfur subunit, chloroplastic (230 aa).

Residues 1–50 constitute a chloroplast transit peptide; that stretch reads MSSTTLSPTTPSQLCSGKSGISCPSIALLVKPTRTQMTGRGNKGMKITCQ. The helical transmembrane segment at 72-92 threads the bilayer; the sequence is LLGALSLPTAGMLVPYGSFLV. Positions 115–213 constitute a Rieske domain; that stretch reads ATEWLKTHAP…VGVEDGKVVF (99 aa). [2Fe-2S] cluster is bound by residues cysteine 157, histidine 159, cysteine 175, and histidine 178. Cysteine 162 and cysteine 177 are oxidised to a cystine.

Belongs to the Rieske iron-sulfur protein family. As to quaternary structure, the 4 large subunits of the cytochrome b6-f complex are cytochrome b6, subunit IV (17 kDa polypeptide, petD), cytochrome f and the Rieske protein, while the 4 small subunits are petG, petL, petM and petN. The complex functions as a dimer. It depends on [2Fe-2S] cluster as a cofactor.

The protein localises to the plastid. The protein resides in the chloroplast thylakoid membrane. It catalyses the reaction 2 oxidized [plastocyanin] + a plastoquinol + 2 H(+)(in) = 2 reduced [plastocyanin] + a plastoquinone + 4 H(+)(out). Functionally, component of the cytochrome b6-f complex, which mediates electron transfer between photosystem II (PSII) and photosystem I (PSI), cyclic electron flow around PSI, and state transitions. The chain is Cytochrome b6-f complex iron-sulfur subunit, chloroplastic (petC) from Pisum sativum (Garden pea).